Reading from the N-terminus, the 194-residue chain is MVAMAMASLQSSMSSLSLSSNSFLGQPLSPITLSPFLQGKPTEKKCLIVMKLKRWERKECKPNSLPVLHKLHVKVGDTVKVISGHEKGQIGEITKIFKHNSSVIVKDINLKTKHVKSNQEGEPGQINKVEAPIHSSNVMLYSKEKDVTSRVGHKVLENGKRVRYLIKTGEIIDSEENWKKLKEANKKTAEVAAT.

A chloroplast-targeting transit peptide spans 1 to 50 (MVAMAMASLQSSMSSLSLSSNSFLGQPLSPITLSPFLQGKPTEKKCLIVM).

It belongs to the universal ribosomal protein uL24 family. As to quaternary structure, part of the 50S ribosomal subunit.

It is found in the plastid. Its subcellular location is the chloroplast. Its function is as follows. One of two assembly initiator proteins, it binds directly to the 5'-end of the 23S rRNA, where it nucleates assembly of the 50S subunit. The polypeptide is Large ribosomal subunit protein uL24c (RPL24) (Pisum sativum (Garden pea)).